Reading from the N-terminus, the 308-residue chain is MKQFLTAAIVTLLMTAGYYHLQEDDTNDFERWALKNNKFYTESEKLYRMEIYNSNKRMIEEHNQREDVTYQMGENQFMTLSHEEFVDLYLQKSDSSVNIMGASLPEVQLEGLGAVDWRNYTTVKEQGQCASGWAFSVSNSLEAWYAIRGFQKINASTQQIVDCDYNNTGCSGGYNAYAMEYVLRVGLVSSTNYPYVAKNQTCKQSRNGTYFINGYSFVGGSQSNLQYYLNNYPISVGVEASNWQFYRSGLFSNCSSNGTNHYALAVGFDSANNWIVQNSWGTQWGESGNIRLYPQNTCGILNYPYQVY.

Residues Met-1 to Leu-21 form the signal peptide. A propeptide spans Gln-22–Glu-110 (activation peptide). 2 disulfide bridges follow: Cys-129–Cys-170 and Cys-254–Cys-298. Catalysis depends on residues His-261 and Asn-278.

This sequence belongs to the peptidase C1 family.

The protein resides in the secreted. The catalysed reaction is Specificity close to that of papain. As compared to cathepsin B, cathepsin L exhibits higher activity toward protein substrates, but has little activity on Z-Arg-Arg-NHMec, and no peptidyl-dipeptidase activity.. Its function is as follows. May be involved in extracellular digestion. The chain is Putative cathepsin L 3 from Paramecium tetraurelia.